Consider the following 220-residue polypeptide: 1-Cys peroxiredoxin B (220 aa).

In terms of domain architecture, Thioredoxin spans 4 to 165; the sequence is LTLGDVVPDL…VLRATDALLT (162 aa). The active-site Cysteine sulfenic acid (-SOH) intermediate is Cys46. The Bipartite nuclear localization signal signature appears at 195 to 218; it reads KARFPAGFETAQLPSNKCYLRFTQ.

It belongs to the peroxiredoxin family. Prx6 subfamily.

It is found in the nucleus. Its subcellular location is the cytoplasm. It catalyses the reaction a hydroperoxide + [thioredoxin]-dithiol = an alcohol + [thioredoxin]-disulfide + H2O. Thiol-specific peroxidase that catalyzes the reduction of hydrogen peroxide and organic hydroperoxides to water and alcohols, respectively. Seems to contribute to the inhibition of germination during stress. The protein is 1-Cys peroxiredoxin B of Oryza sativa subsp. japonica (Rice).